The primary structure comprises 354 residues: Histone-lysine N-methyltransferase SUVR3 (354 aa).

Positions 143–188 (SGCECERCEEGYCKCLAFAGMEEIANECGSGCGCGSDCSNRVTQKG) constitute a Pre-SET domain. Positions 145, 147, 150, 155, 157, 170, 174, 176, and 180 each coordinate Zn(2+). In terms of domain architecture, SET spans 191-323 (VSLKIVRDEK…AEEELSFSYG (133 aa)). Residues 201–203 (KGW) and 281–282 (NH) each bind S-adenosyl-L-methionine. Cys-284 contacts Zn(2+). Position 322 (Tyr-322) interacts with S-adenosyl-L-methionine. Residues 334–350 (DKLNCSCGSSCCLGTLP) enclose the Post-SET domain. Cys-338, Cys-340, and Cys-345 together coordinate Zn(2+).

Belongs to the class V-like SAM-binding methyltransferase superfamily.

Its subcellular location is the nucleus. It is found in the chromosome. The enzyme catalyses L-lysyl-[histone] + S-adenosyl-L-methionine = N(6)-methyl-L-lysyl-[histone] + S-adenosyl-L-homocysteine + H(+). Functionally, histone methyltransferase. This Arabidopsis thaliana (Mouse-ear cress) protein is Histone-lysine N-methyltransferase SUVR3 (SUVR3).